The following is a 93-amino-acid chain: Pyrimidine/purine nucleoside phosphorylase (93 aa).

This sequence belongs to the nucleoside phosphorylase PpnP family.

The enzyme catalyses a purine D-ribonucleoside + phosphate = a purine nucleobase + alpha-D-ribose 1-phosphate. It catalyses the reaction adenosine + phosphate = alpha-D-ribose 1-phosphate + adenine. The catalysed reaction is cytidine + phosphate = cytosine + alpha-D-ribose 1-phosphate. It carries out the reaction guanosine + phosphate = alpha-D-ribose 1-phosphate + guanine. The enzyme catalyses inosine + phosphate = alpha-D-ribose 1-phosphate + hypoxanthine. It catalyses the reaction thymidine + phosphate = 2-deoxy-alpha-D-ribose 1-phosphate + thymine. The catalysed reaction is uridine + phosphate = alpha-D-ribose 1-phosphate + uracil. It carries out the reaction xanthosine + phosphate = alpha-D-ribose 1-phosphate + xanthine. Functionally, catalyzes the phosphorolysis of diverse nucleosides, yielding D-ribose 1-phosphate and the respective free bases. Can use uridine, adenosine, guanosine, cytidine, thymidine, inosine and xanthosine as substrates. Also catalyzes the reverse reactions. This Vibrio atlanticus (strain LGP32) (Vibrio splendidus (strain Mel32)) protein is Pyrimidine/purine nucleoside phosphorylase.